Reading from the N-terminus, the 76-residue chain is Small ribosomal subunit protein bS18 (76 aa).

This sequence belongs to the bacterial ribosomal protein bS18 family. Part of the 30S ribosomal subunit. Forms a tight heterodimer with protein bS6.

Functionally, binds as a heterodimer with protein bS6 to the central domain of the 16S rRNA, where it helps stabilize the platform of the 30S subunit. In Alkaliphilus metalliredigens (strain QYMF), this protein is Small ribosomal subunit protein bS18.